Here is a 327-residue protein sequence, read N- to C-terminus: Putative HTH-type transcriptional regulatory protein Mevan_1514 (327 aa).

One can recognise an HTH cro/C1-type domain in the interval 128–189; the sequence is LKETREKLNI…IKGINITDYF (62 aa). A DNA-binding region (H-T-H motif) is located at residues 139 to 158; it reads VGELAEFSRVSRKTIYKYEQ.

The sequence is that of Putative HTH-type transcriptional regulatory protein Mevan_1514 from Methanococcus vannielii (strain ATCC 35089 / DSM 1224 / JCM 13029 / OCM 148 / SB).